Here is a 417-residue protein sequence, read N- to C-terminus: Serine protease hepsin (417 aa).

Residues 1–23 (MAQKEGGRTVPCCSRPKVAALTA) lie on the Cytoplasmic side of the membrane. The helical; Signal-anchor for type II membrane protein transmembrane segment at 24-44 (GTLLLLTAIGAASWAIVAVLL) threads the bilayer. Over 45 to 417 (RSDQEPLYPV…SEASGMVTQL (373 aa)) the chain is Extracellular. Positions 54 to 151 (VQVSSADARL…RGRFLATICQ (98 aa)) constitute an SRCR domain. Intrachain disulfides connect Cys77–Cys140, Cys90–Cys150, Cys119–Cys138, Cys153–Cys277, Cys188–Cys204, Cys291–Cys359, Cys322–Cys338, and Cys349–Cys381. The N-linked (GlcNAc...) asparagine glycan is linked to Asn112. Residues 163-405 (IVGGRDTSLG…FREWIFQAIK (243 aa)) enclose the Peptidase S1 domain. Catalysis depends on charge relay system residues His203 and Asp257. Catalysis depends on Ser353, which acts as the Charge relay system.

The protein belongs to the peptidase S1 family.

Its subcellular location is the membrane. The catalysed reaction is Cleavage after basic amino-acid residues, with Arg strongly preferred to Lys.. Functionally, plays an essential role in cell growth and maintenance of cell morphology. May mediate the activating cleavage of HGF and MST1/HGFL. Plays a role in the proteolytic processing of ACE2. This chain is Serine protease hepsin (HPN), found in Pongo abelii (Sumatran orangutan).